Here is a 380-residue protein sequence, read N- to C-terminus: Acyl-coenzyme A diphosphatase NUDT19 (380 aa).

In terms of domain architecture, Nudix hydrolase spans 8-264; sequence WKEAATLIVA…KIWIPPPQFY (257 aa). Positions 115–136 match the Nudix box motif; it reads SLIPGEVATRICAIRETFEESG. Residues Glu-130 and Glu-134 each coordinate Mg(2+). Residues 378–380 carry the Microbody targeting signal motif; the sequence is NKL.

Belongs to the Nudix hydrolase family. In terms of assembly, monomer. It depends on Mg(2+) as a cofactor. Requires Mn(2+) as cofactor.

It is found in the peroxisome. The enzyme catalyses an acyl-CoA + H2O = an acyl-4'-phosphopantetheine + adenosine 3',5'-bisphosphate + 2 H(+). It carries out the reaction CoA + H2O = (R)-4'-phosphopantetheine + adenosine 3',5'-bisphosphate + 2 H(+). It catalyses the reaction hexanoyl-CoA + H2O = hexanoyl-4'-phosphopantetheine + adenosine 3',5'-bisphosphate + 2 H(+). The catalysed reaction is octanoyl-CoA + H2O = S-octanoyl-4'-phosphopantetheine + adenosine 3',5'-bisphosphate + 2 H(+). The enzyme catalyses butanoyl-CoA + H2O = S-butanoyl-4'-phosphopantetheine + adenosine 3',5'-bisphosphate + 2 H(+). It carries out the reaction propanoyl-CoA + H2O = propanoyl-4'-phosphopantetheine + adenosine 3',5'-bisphosphate + 2 H(+). It catalyses the reaction malonyl-CoA + H2O = malonyl-4'-phosphopantetheine + adenosine 3',5'-bisphosphate + 2 H(+). The catalysed reaction is succinyl-CoA + H2O = succinyl-4'-phosphopantetheine + adenosine 3',5'-bisphosphate + 2 H(+). The enzyme catalyses choloyl-CoA + H2O = S-choloyl-4'-phosphopantetheine + adenosine 3',5'-bisphosphate + 2 H(+). It carries out the reaction 4,8-dimethylnonanoyl-CoA + H2O = S-(4,8-dimethylnonanoyl)-4'-phosphopantetheine + adenosine 3',5'-bisphosphate + 2 H(+). It catalyses the reaction (9Z,12Z,15Z)-octadecatrienoyl-CoA + H2O = S-(9Z,12Z,15Z-octadecatrienoyl)-4'-phosphopantetheine + adenosine 3',5'-bisphosphate + 2 H(+). The catalysed reaction is (9Z,12Z)-octadecadienoyl-CoA + H2O = S-(9Z,12Z-octadecadienoyl)-4'-phosphopantetheine + adenosine 3',5'-bisphosphate + 2 H(+). The enzyme catalyses (9Z)-hexadecenoyl-CoA + H2O = S-(9Z-hexadecenoyl)-4'-phosphopantetheine + adenosine 3',5'-bisphosphate + 2 H(+). It carries out the reaction (9Z)-tetradecenoyl-CoA + H2O = S-(9Z-tetradecenoyl)-4'-phosphopantetheine + adenosine 3',5'-bisphosphate + 2 H(+). It catalyses the reaction (6Z)-octenoyl-CoA + H2O = S-(6Z-octenoyl)-4'-phosphopantetheine + adenosine 3',5'-bisphosphate + 2 H(+). The catalysed reaction is hexadecanoyl-CoA + H2O = S-hexadecanoyl-4'-phosphopantetheine + adenosine 3',5'-bisphosphate + 2 H(+). The enzyme catalyses tetradecanoyl-CoA + H2O = tetradecanoyl-4'-phosphopantetheine + adenosine 3',5'-bisphosphate + 2 H(+). It carries out the reaction dodecanoyl-CoA + H2O = S-dodecanoyl-4'-phosphopantetheine + adenosine 3',5'-bisphosphate + 2 H(+). It catalyses the reaction a 5'-end CoA-ribonucleoside in mRNA + H2O = a 5'-end phospho-adenosine-phospho-ribonucleoside in mRNA + (R)-4'-phosphopantetheine + 2 H(+). Fatty acyl-coenzyme A (CoA) diphosphatase that hydrolyzes fatty acyl-CoA to yield acyl-4'-phosphopantetheine and adenosine 3',5'-bisphosphate. Mediates the hydrolysis of a wide range of CoA esters, including choloyl-CoA and branched-chain fatty-acyl-CoA esters and at low substrate concentrations medium and long-chain fatty-acyl-CoA esters are the primary substrates. Highest activity seen with medium-chain acyl-CoA esters and higher rates of activity seen with the unsaturated acyl-CoA esters compared with the saturated esters. Exhibits decapping activity towards dpCoA-capped RNAs in vitro. This chain is Acyl-coenzyme A diphosphatase NUDT19 (nudt19), found in Xenopus laevis (African clawed frog).